The primary structure comprises 542 residues: Carboxypeptidase Y homolog A (542 aa).

The first 17 residues, Met1–Val17, serve as a signal peptide directing secretion. A propeptide spanning residues Pro18–Lys123 is cleaved from the precursor. 5 disulfide bridges follow: Cys178/Cys418, Cys312/Cys326, Cys336/Cys359, Cys343/Cys352, and Cys381/Cys388. N-linked (GlcNAc...) asparagine glycosylation is present at Asn209. Ser265 is an active-site residue. Asp457 is an active-site residue. An N-linked (GlcNAc...) asparagine glycan is attached at Asn508. Residue His519 is part of the active site.

It belongs to the peptidase S10 family.

The protein localises to the vacuole. The catalysed reaction is Release of a C-terminal amino acid with broad specificity.. Its function is as follows. Vacuolar carboxypeptidase involved in degradation of small peptides. Digests preferentially peptides containing an aliphatic or hydrophobic residue in P1' position, as well as methionine, leucine or phenylalanine in P1 position of ester substrate. The sequence is that of Carboxypeptidase Y homolog A (cpyA) from Aspergillus oryzae (strain ATCC 42149 / RIB 40) (Yellow koji mold).